Reading from the N-terminus, the 872-residue chain is Alanine--tRNA ligase (872 aa).

4 residues coordinate Zn(2+): H567, H571, C669, and H673.

The protein belongs to the class-II aminoacyl-tRNA synthetase family. Requires Zn(2+) as cofactor.

Its subcellular location is the cytoplasm. It carries out the reaction tRNA(Ala) + L-alanine + ATP = L-alanyl-tRNA(Ala) + AMP + diphosphate. Catalyzes the attachment of alanine to tRNA(Ala) in a two-step reaction: alanine is first activated by ATP to form Ala-AMP and then transferred to the acceptor end of tRNA(Ala). Also edits incorrectly charged Ser-tRNA(Ala) and Gly-tRNA(Ala) via its editing domain. The polypeptide is Alanine--tRNA ligase (Streptococcus pyogenes serotype M28 (strain MGAS6180)).